The primary structure comprises 599 residues: Elongation factor 4 (599 aa).

The tr-type G domain maps to 5 to 187 (SHIRNFSIIA…RLVQTIPAPT (183 aa)). Residues 17–22 (DHGKST) and 134–137 (NKMD) contribute to the GTP site.

It belongs to the TRAFAC class translation factor GTPase superfamily. Classic translation factor GTPase family. LepA subfamily.

It is found in the cell inner membrane. The catalysed reaction is GTP + H2O = GDP + phosphate + H(+). Required for accurate and efficient protein synthesis under certain stress conditions. May act as a fidelity factor of the translation reaction, by catalyzing a one-codon backward translocation of tRNAs on improperly translocated ribosomes. Back-translocation proceeds from a post-translocation (POST) complex to a pre-translocation (PRE) complex, thus giving elongation factor G a second chance to translocate the tRNAs correctly. Binds to ribosomes in a GTP-dependent manner. This chain is Elongation factor 4, found in Ectopseudomonas mendocina (strain ymp) (Pseudomonas mendocina).